A 524-amino-acid polypeptide reads, in one-letter code: Phosphoenolpyruvate carboxykinase (ATP) (524 aa).

Substrate is bound by residues arginine 52, tyrosine 188, and lysine 194. ATP-binding positions include lysine 194, histidine 213, and 229–237; that span reads GLSGTGKTT. 2 residues coordinate Mn(2+): lysine 194 and histidine 213. Aspartate 250 is a binding site for Mn(2+). ATP contacts are provided by glutamate 278, arginine 314, and threonine 439. Arginine 314 contacts substrate.

Belongs to the phosphoenolpyruvate carboxykinase (ATP) family. The cofactor is Mn(2+).

The protein localises to the cytoplasm. The enzyme catalyses oxaloacetate + ATP = phosphoenolpyruvate + ADP + CO2. The protein operates within carbohydrate biosynthesis; gluconeogenesis. In terms of biological role, involved in the gluconeogenesis. Catalyzes the conversion of oxaloacetate (OAA) to phosphoenolpyruvate (PEP) through direct phosphoryl transfer between the nucleoside triphosphate and OAA. In Campylobacter jejuni subsp. doylei (strain ATCC BAA-1458 / RM4099 / 269.97), this protein is Phosphoenolpyruvate carboxykinase (ATP).